The primary structure comprises 701 residues: DNA ligase (701 aa).

Residues 43 to 47 (DAAYD), 92 to 93 (SL), and E126 contribute to the NAD(+) site. The active-site N6-AMP-lysine intermediate is the K128. Positions 149, 186, 302, and 326 each coordinate NAD(+). Zn(2+) is bound by residues C420, C423, C444, and C450. A BRCT domain is found at 623 to 701 (ANDSPVAGKT…EDEWFDLIGA (79 aa)).

Belongs to the NAD-dependent DNA ligase family. LigA subfamily. Mg(2+) serves as cofactor. Mn(2+) is required as a cofactor.

The catalysed reaction is NAD(+) + (deoxyribonucleotide)n-3'-hydroxyl + 5'-phospho-(deoxyribonucleotide)m = (deoxyribonucleotide)n+m + AMP + beta-nicotinamide D-nucleotide.. In terms of biological role, DNA ligase that catalyzes the formation of phosphodiester linkages between 5'-phosphoryl and 3'-hydroxyl groups in double-stranded DNA using NAD as a coenzyme and as the energy source for the reaction. It is essential for DNA replication and repair of damaged DNA. The protein is DNA ligase of Maricaulis maris (strain MCS10) (Caulobacter maris).